Here is a 168-residue protein sequence, read N- to C-terminus: Photosystem I assembly protein Ycf3 (168 aa).

TPR repeat units lie at residues 35–68 (AFTY…EIDP), 72–105 (SYIL…NPFL), and 120–153 (GEQA…TPGN).

Belongs to the Ycf3 family.

It localises to the plastid. It is found in the chloroplast thylakoid membrane. Essential for the assembly of the photosystem I (PSI) complex. May act as a chaperone-like factor to guide the assembly of the PSI subunits. This is Photosystem I assembly protein Ycf3 from Acorus calamus var. americanus (American sweet flag).